A 172-amino-acid polypeptide reads, in one-letter code: Lectin (172 aa).

A signal peptide spans 1-20 (MVWCLADLRAYVLVLLVISG). Residues 36–172 (DCTPGWDCHF…ICKYTTPCRY (137 aa)) enclose the C-type lectin domain. 2 cysteine pairs are disulfide-bonded: Cys-65–Cys-164 and Cys-140–Cys-156. The N-linked (GlcNAc...) asparagine glycan is linked to Asn-93.

Heterodimer. In terms of tissue distribution, anterior part of oviduct.

Its subcellular location is the secreted. Its function is as follows. May be involved in protection of eggs and embryos against microorganisms. Calcium-dependent lectin with specificity to D-glucose and D-glucosamine. Can agglutinate microorganisms in vivo. This Pleurodeles waltl (Iberian ribbed newt) protein is Lectin (LEC).